A 461-amino-acid chain; its full sequence is Bifunctional protein GlmU (461 aa).

The interval 1 to 229 is pyrophosphorylase; that stretch reads MNKYVVILAA…FSESLGVNDR (229 aa). UDP-N-acetyl-alpha-D-glucosamine-binding positions include 8–11, Lys22, Gln72, and 77–78; these read LAAG and GT. Asp102 contacts Mg(2+). 4 residues coordinate UDP-N-acetyl-alpha-D-glucosamine: Gly139, Glu154, Asn169, and Asn227. Asn227 lines the Mg(2+) pocket. The linker stretch occupies residues 230 to 250; the sequence is IALAQATKIMQRRINEEHMKN. Residues 251-461 are N-acetyltransferase; that stretch reads GVSFIDPDTA…LPLSKDKEWE (211 aa). UDP-N-acetyl-alpha-D-glucosamine-binding residues include Arg332 and Lys350. The Proton acceptor role is filled by His362. UDP-N-acetyl-alpha-D-glucosamine contacts are provided by Tyr365 and Asn376. Residues 385–386, Ala422, and Arg439 contribute to the acetyl-CoA site; that span reads NY.

It in the N-terminal section; belongs to the N-acetylglucosamine-1-phosphate uridyltransferase family. The protein in the C-terminal section; belongs to the transferase hexapeptide repeat family. In terms of assembly, homotrimer. The cofactor is Mg(2+).

Its subcellular location is the cytoplasm. It catalyses the reaction alpha-D-glucosamine 1-phosphate + acetyl-CoA = N-acetyl-alpha-D-glucosamine 1-phosphate + CoA + H(+). The catalysed reaction is N-acetyl-alpha-D-glucosamine 1-phosphate + UTP + H(+) = UDP-N-acetyl-alpha-D-glucosamine + diphosphate. It participates in nucleotide-sugar biosynthesis; UDP-N-acetyl-alpha-D-glucosamine biosynthesis; N-acetyl-alpha-D-glucosamine 1-phosphate from alpha-D-glucosamine 6-phosphate (route II): step 2/2. Its pathway is nucleotide-sugar biosynthesis; UDP-N-acetyl-alpha-D-glucosamine biosynthesis; UDP-N-acetyl-alpha-D-glucosamine from N-acetyl-alpha-D-glucosamine 1-phosphate: step 1/1. It functions in the pathway bacterial outer membrane biogenesis; LPS lipid A biosynthesis. In terms of biological role, catalyzes the last two sequential reactions in the de novo biosynthetic pathway for UDP-N-acetylglucosamine (UDP-GlcNAc). The C-terminal domain catalyzes the transfer of acetyl group from acetyl coenzyme A to glucosamine-1-phosphate (GlcN-1-P) to produce N-acetylglucosamine-1-phosphate (GlcNAc-1-P), which is converted into UDP-GlcNAc by the transfer of uridine 5-monophosphate (from uridine 5-triphosphate), a reaction catalyzed by the N-terminal domain. The sequence is that of Bifunctional protein GlmU from Lactobacillus gasseri (strain ATCC 33323 / DSM 20243 / BCRC 14619 / CIP 102991 / JCM 1131 / KCTC 3163 / NCIMB 11718 / NCTC 13722 / AM63).